The chain runs to 337 residues: Peptide methionine sulfoxide reductase MsrA/MsrB (337 aa).

Residues 28-181 are peptide methionine sulfoxide reductase A; the sequence is KDIYLAGGCF…PGGYCHVDLS (154 aa). The active site involves Cys-36. In terms of domain architecture, MsrB spans 198 to 321; the sequence is KDELKAKLSD…NGASLKFIPL (124 aa). The Nucleophile role is filled by Cys-310.

It in the N-terminal section; belongs to the MsrA Met sulfoxide reductase family. The protein in the C-terminal section; belongs to the MsrB Met sulfoxide reductase family.

The enzyme catalyses L-methionyl-[protein] + [thioredoxin]-disulfide + H2O = L-methionyl-(S)-S-oxide-[protein] + [thioredoxin]-dithiol. It catalyses the reaction [thioredoxin]-disulfide + L-methionine + H2O = L-methionine (S)-S-oxide + [thioredoxin]-dithiol. The catalysed reaction is L-methionyl-[protein] + [thioredoxin]-disulfide + H2O = L-methionyl-(R)-S-oxide-[protein] + [thioredoxin]-dithiol. Has an important function as a repair enzyme for proteins that have been inactivated by oxidation. Catalyzes the reversible oxidation-reduction of methionine sulfoxide in proteins to methionine. The protein is Peptide methionine sulfoxide reductase MsrA/MsrB (msrAB) of Campylobacter fetus.